A 563-amino-acid polypeptide reads, in one-letter code: Adenine deaminase (563 aa).

The protein belongs to the metallo-dependent hydrolases superfamily. Adenine deaminase family. Mn(2+) serves as cofactor.

It carries out the reaction adenine + H2O + H(+) = hypoxanthine + NH4(+). This chain is Adenine deaminase, found in Brucella anthropi (strain ATCC 49188 / DSM 6882 / CCUG 24695 / JCM 21032 / LMG 3331 / NBRC 15819 / NCTC 12168 / Alc 37) (Ochrobactrum anthropi).